Consider the following 75-residue polypeptide: Scuwaprin-a (75 aa).

The first 24 residues, 1–24 (MSSGGLLLLLGLLTLWAELTPVSG), serve as a signal peptide directing secretion. A WAP domain is found at 27–72 (RPKKPGLCPPRPQKPPCVKECKNDWSCPGQQKCCSYGCIDECRDPI). 4 disulfide bridges follow: Cys-34–Cys-60, Cys-43–Cys-64, Cys-47–Cys-59, and Cys-53–Cys-68.

This sequence belongs to the venom waprin family. In terms of tissue distribution, expressed by the venom gland.

It is found in the secreted. In terms of biological role, damages membranes of susceptible bacteria. Has no hemolytic activity. Not toxic to mice. Does not inhibit the proteinases elastase and cathepsin G. The protein is Scuwaprin-a of Oxyuranus scutellatus scutellatus (Australian taipan).